Reading from the N-terminus, the 290-residue chain is MTTDMTWAQTIILSLIQGLTEFLPVSSSGHLRIFSTLLWGEDAGASFTAVIQLGTELAVLVFFAKDIWNIASAWCKGVWEWLTDLTGKHGRRVHRQSFDYRMGWMVIVGTLPVAVLGYLGKDLIRDNLRNLWITATMLVLFSFVFILAERMGRRERSFDELTMRDSVIMGFAQCLALIPGVSRSGGTVSAGLFLNLDREVATRYSFLLAIPAVLASGLFSLPDAFSPDAGQAASGAQLFVGTAIAFAVGYASIAWLLKFVANHSFAWFALWRIPLGLAVMGLLAFGVLQA.

6 helical membrane passes run 104-124, 128-148, 174-194, 205-225, 237-257, and 268-288; these read WMVI…KDLI, LRNL…FILA, CLAL…GLFL, SFLL…PDAF, QLFV…AWLL, and FALW…FGVL.

The protein belongs to the UppP family.

The protein resides in the cell membrane. The catalysed reaction is di-trans,octa-cis-undecaprenyl diphosphate + H2O = di-trans,octa-cis-undecaprenyl phosphate + phosphate + H(+). Catalyzes the dephosphorylation of undecaprenyl diphosphate (UPP). Confers resistance to bacitracin. The polypeptide is Undecaprenyl-diphosphatase 2 (Corynebacterium jeikeium (strain K411)).